The sequence spans 331 residues: Lipoyl synthase (331 aa).

Positions 1 to 33 (MSDALIATSSEAPQSPAEQYDPTRKQKSADKTA) are disordered. Positions 7-17 (ATSSEAPQSPA) are enriched in polar residues. The span at 21–33 (DPTRKQKSADKTA) shows a compositional bias: basic and acidic residues. 7 residues coordinate [4Fe-4S] cluster: Cys78, Cys83, Cys89, Cys104, Cys108, Cys111, and Ser318. One can recognise a Radical SAM core domain in the interval 89-307 (CFGKGTATFM…EEEAYKMGFT (219 aa)).

It belongs to the radical SAM superfamily. Lipoyl synthase family. [4Fe-4S] cluster is required as a cofactor.

Its subcellular location is the cytoplasm. It carries out the reaction [[Fe-S] cluster scaffold protein carrying a second [4Fe-4S](2+) cluster] + N(6)-octanoyl-L-lysyl-[protein] + 2 oxidized [2Fe-2S]-[ferredoxin] + 2 S-adenosyl-L-methionine + 4 H(+) = [[Fe-S] cluster scaffold protein] + N(6)-[(R)-dihydrolipoyl]-L-lysyl-[protein] + 4 Fe(3+) + 2 hydrogen sulfide + 2 5'-deoxyadenosine + 2 L-methionine + 2 reduced [2Fe-2S]-[ferredoxin]. Its pathway is protein modification; protein lipoylation via endogenous pathway; protein N(6)-(lipoyl)lysine from octanoyl-[acyl-carrier-protein]: step 2/2. Its function is as follows. Catalyzes the radical-mediated insertion of two sulfur atoms into the C-6 and C-8 positions of the octanoyl moiety bound to the lipoyl domains of lipoate-dependent enzymes, thereby converting the octanoylated domains into lipoylated derivatives. The protein is Lipoyl synthase of Cupriavidus necator (strain ATCC 17699 / DSM 428 / KCTC 22496 / NCIMB 10442 / H16 / Stanier 337) (Ralstonia eutropha).